Here is a 701-residue protein sequence, read N- to C-terminus: Polyribonucleotide nucleotidyltransferase (701 aa).

2 residues coordinate Mg(2+): D480 and D486. The 60-residue stretch at 547–606 folds into the KH domain; it reads PKIDTIKIDVDKIKVVIGKGGETIDKIIAETGVKIDIDDEGNVSIYSSDQAAINRTKEII. The S1 motif domain occupies 616-684; the sequence is GEVYHAKVVR…EKGRVDASMK (69 aa). A disordered region spans residues 682–701; that stretch reads SMKALIPRPPKPEKKEEKHD. Residues 691–701 show a composition bias toward basic and acidic residues; that stretch reads PKPEKKEEKHD.

Belongs to the polyribonucleotide nucleotidyltransferase family. Mg(2+) serves as cofactor.

It is found in the cytoplasm. The catalysed reaction is RNA(n+1) + phosphate = RNA(n) + a ribonucleoside 5'-diphosphate. Its function is as follows. Involved in mRNA degradation. Catalyzes the phosphorolysis of single-stranded polyribonucleotides processively in the 3'- to 5'-direction. The polypeptide is Polyribonucleotide nucleotidyltransferase (Streptococcus pyogenes serotype M12 (strain MGAS2096)).